A 1432-amino-acid chain; its full sequence is ABC transporter B family member 3 (1432 aa).

Disordered regions lie at residues 1–21 (MDDG…EEEI) and 48–149 (ITQP…KTEE). 3 stretches are compositionally biased toward low complexity: residues 52–62 (SNNNNNSNNNN), 76–106 (NNNN…FNNN), and 118–135 (NTNE…NNND). Positions 117–163 (ENTNENNNKNNNNNNNNNDDYNDGADERVKTEEEIKKEAENELNQSV) form a coiled coil. The region spanning 180–479 (MFLGTIAAVI…ASPCLALFAQ (300 aa)) is the ABC transmembrane type-1 1 domain. 6 consecutive transmembrane segments (helical) span residues 185-205 (IAAV…GLVV), 232-252 (LLML…LWMI), 303-323 (KVGR…IGFT), 325-345 (GWQL…GGFF), 410-430 (GLGL…AFWY), and 457-477 (FFAV…LALF). The ABC transporter 1 domain occupies 514–750 (IEFKDVGFHY…QGLYFDLVEK (237 aa)). An ATP-binding site is contributed by 549–556 (GDSGGGKS). Positions 787–819 (KRSLRKNESESNKKDKEDSNNKKKKKSNKKKVE) are disordered. Over residues 791-807 (RKNESESNKKDKEDSNN) the composition is skewed to basic and acidic residues. An ABC transmembrane type-1 2 domain is found at 837 to 1157 (WCFGFLSAVG…ASSFAPDLAK (321 aa)). Helical transmembrane passes span 838-858 (CFGF…AMVF), 882-902 (LMFV…GFLF), 968-988 (MVGG…VIIA), 989-1009 (CFPL…GFSS), 1060-1080 (ISGF…CLSF), and 1134-1154 (VFFA…FAPD). In terms of domain architecture, ABC transporter 2 spans 1192 to 1428 (IEFKNLHFSY…EGPYSQLWYN (237 aa)). Residue 1227 to 1234 (GDSGGGKS) participates in ATP binding.

It belongs to the ABC transporter superfamily. ABCB family. Multidrug resistance exporter (TC 3.A.1.201) subfamily.

It localises to the membrane. The protein is ABC transporter B family member 3 (abcB3) of Dictyostelium discoideum (Social amoeba).